Reading from the N-terminus, the 176-residue chain is NAD(P)H-quinone oxidoreductase subunit 6, chloroplastic (176 aa).

A run of 5 helical transmembrane segments spans residues 10–30 (FLLVFLGSGLLVGGLGVVLLP), 32–52 (PIFSAFSLGFVLFCISLLYIL), 61–81 (AQLLIYVGAINVLIIFAVMFM), 92–112 (LWTVGNGITSLVCTTILFSLL), and 152–172 (FFLPFELISIILLVALIGAIS).

Belongs to the complex I subunit 6 family. NDH is composed of at least 16 different subunits, 5 of which are encoded in the nucleus.

It localises to the plastid. The protein resides in the chloroplast thylakoid membrane. It catalyses the reaction a plastoquinone + NADH + (n+1) H(+)(in) = a plastoquinol + NAD(+) + n H(+)(out). It carries out the reaction a plastoquinone + NADPH + (n+1) H(+)(in) = a plastoquinol + NADP(+) + n H(+)(out). NDH shuttles electrons from NAD(P)H:plastoquinone, via FMN and iron-sulfur (Fe-S) centers, to quinones in the photosynthetic chain and possibly in a chloroplast respiratory chain. The immediate electron acceptor for the enzyme in this species is believed to be plastoquinone. Couples the redox reaction to proton translocation, and thus conserves the redox energy in a proton gradient. This is NAD(P)H-quinone oxidoreductase subunit 6, chloroplastic (ndhG) from Lepidium virginicum (Virginia pepperweed).